Consider the following 199-residue polypeptide: Female-specific protein transformer (199 aa).

2 disordered regions span residues 1–121 (MDAD…RTPR) and 178–199 (YRAGPFRPHPRYSYRNDRQAPN). A compositionally biased stretch (basic and acidic residues) spans 20–37 (REKMPYFADEVRERDRVR). 3 stretches are compositionally biased toward basic residues: residues 56-69 (RRSRHERPRSRSRT), 77-92 (CQRRLSRSYVRHRSGS), and 102-119 (SRRRRSRSRSRSRGRSRT).

It is found in the nucleus speckle. Functionally, member of the regulatory pathway controlling female somatic sexual differentiation, regulated by Sxl. Activates dsx female-specific splicing by promoting the formation of a splicing enhancer complex which consists of tra, tra2 and sr proteins. The chain is Female-specific protein transformer (tra) from Drosophila virilis (Fruit fly).